The sequence spans 234 residues: MPFVRPLVTVVRAGRHSYSAGLQLQQRLARSNQILNPPAEFRNYLVLQEHDPVYTVGLRTKDYTAQDEDRLRRLGADFHRTDRGGLITFHGPGQLVAYPILHLGQFVPSIRWYVATLERMVVEACHQMGISSAKATKDTGIWVGDNKICAIGIHGSRYVTTHGIGLNCCTDLQWFEHIVPCGIEGKGVTSLSKELDRHFPVEEASGALLNSFAKVFECRLQEHAKKPASSAEIG.

Residues 1–28 constitute a mitochondrion transit peptide; it reads MPFVRPLVTVVRAGRHSYSAGLQLQQRL. In terms of domain architecture, BPL/LPL catalytic spans 39–220; it reads AEFRNYLVLQ…SFAKVFECRL (182 aa). Substrate is bound by residues 83–90, 150–152, and 163–165; these read RGGLITFH, AIG, and GIG. Catalysis depends on Cys-181, which acts as the Acyl-thioester intermediate.

It belongs to the LipB family.

The protein resides in the mitochondrion. It catalyses the reaction octanoyl-[ACP] + L-lysyl-[protein] = N(6)-octanoyl-L-lysyl-[protein] + holo-[ACP] + H(+). Its pathway is protein modification; protein lipoylation via endogenous pathway; protein N(6)-(lipoyl)lysine from octanoyl-[acyl-carrier-protein]: step 1/2. In terms of biological role, catalyzes the transfer of endogenously produced octanoic acid from octanoyl-acyl-carrier-protein onto the lipoyl domains of lipoate-dependent enzymes. Lipoyl-ACP can also act as a substrate although octanoyl-ACP is likely to be the physiological substrate. This is Putative lipoyltransferase 2, mitochondrial from Drosophila melanogaster (Fruit fly).